The following is a 265-amino-acid chain: Oxygen-evolving enhancer protein 2-2, chloroplastic (265 aa).

Residues 1–79 (MASTQCFLHH…VGSKVSPADA (79 aa)) constitute a chloroplast transit peptide.

This sequence belongs to the PsbP family.

The protein resides in the plastid. It localises to the chloroplast thylakoid membrane. In terms of biological role, may be involved in the regulation of photosystem II. This Nicotiana tabacum (Common tobacco) protein is Oxygen-evolving enhancer protein 2-2, chloroplastic (PSBP2).